The chain runs to 587 residues: Trans-activating transcriptional regulatory protein (587 aa).

The protein belongs to the nucleopolyhedrovirus IE-1 protein family.

Functionally, regulatory transcriptional protein, which trans-activates gene expression from early baculovirus promoters. Can also trans-activate its own promoter, suggesting that it is autoregulated during normal infection of insect cells. The protein is Trans-activating transcriptional regulatory protein (IE1) of Bombyx mori nuclear polyhedrosis virus (BmNPV).